The sequence spans 81 residues: DNA-directed RNA polymerase subunit Rpo6 (81 aa).

It belongs to the archaeal Rpo6/eukaryotic RPB6 RNA polymerase subunit family. Part of the RNA polymerase complex.

It localises to the cytoplasm. It carries out the reaction RNA(n) + a ribonucleoside 5'-triphosphate = RNA(n+1) + diphosphate. DNA-dependent RNA polymerase (RNAP) catalyzes the transcription of DNA into RNA using the four ribonucleoside triphosphates as substrates. The sequence is that of DNA-directed RNA polymerase subunit Rpo6 from Thermofilum pendens (strain DSM 2475 / Hrk 5).